The chain runs to 611 residues: Virulence metalloprotease (611 aa).

The first 25 residues, 1–25 (MKKVQRQMKWLFLAASISAALPVSA), serve as a signal peptide directing secretion. A propeptide spanning residues 26 to 199 (AKMVQVDDPS…VLQTWEGLNH (174 aa)) is cleaved from the precursor. His346 is a binding site for Zn(2+). Residue Glu347 is part of the active site. His350 and Glu370 together coordinate Zn(2+). Catalysis depends on His429, which acts as the Proton donor.

The protein belongs to the peptidase M4 family. Ca(2+) serves as cofactor. It depends on Zn(2+) as a cofactor. In terms of processing, seems to be more extensively processed.

Its subcellular location is the secreted. In terms of biological role, extracellular zinc metalloprotease involved in the virulence mechanism of V.anguillarum. The protein is Virulence metalloprotease (empA) of Vibrio anguillarum (Listonella anguillarum).